The chain runs to 149 residues: Large ribosomal subunit protein bL9 (149 aa).

Belongs to the bacterial ribosomal protein bL9 family.

In terms of biological role, binds to the 23S rRNA. The chain is Large ribosomal subunit protein bL9 from Histophilus somni (strain 129Pt) (Haemophilus somnus).